The primary structure comprises 155 residues: FHA domain-containing protein FhaB (155 aa).

The chain crosses the membrane as a helical span at residues 6–28 (LQLTRAGFLMLLWVFIWSVLRIL). At Thr-36 the chain carries Phosphothreonine. Residues 83–132 (VLIGRADDSTLVLTDDYASTRHARLSMRGSEWYVEDLGSTNGTYLDRAKV) form the FHA domain.

Post-translationally, phosphorylated by PknB. Dephosphorylated by PstP.

It is found in the cell membrane. This chain is FHA domain-containing protein FhaB (fhaB), found in Mycobacterium tuberculosis (strain CDC 1551 / Oshkosh).